The sequence spans 133 residues: Late embryogenesis abundant protein B19.3 (133 aa).

Residues 1 to 133 (MASGQQERSE…IDESKFKTKS (133 aa)) form a disordered region. Basic and acidic residues-rich tracts occupy residues 7 to 19 (ERSELDRMAREGE), 32 to 102 (EAQE…EMGR), and 113 to 133 (GGERAAREGIDIDESKFKTKS). 3 consecutive repeat copies span residues 24–43 (GGTGGKTLEAQEHLAEGRSR), 44–63 (GGQTRKDQLGEEGYREMGHK), and 64–83 (GGETRKEQLGEEGYREMGHK). The 3 X 20 AA tandem repeats stretch occupies residues 24–83 (GGTGGKTLEAQEHLAEGRSRGGQTRKDQLGEEGYREMGHKGGETRKEQLGEEGYREMGHK).

The protein belongs to the small hydrophilic plant seed protein family.

In terms of biological role, lea proteins are late embryonic proteins abundant in higher plant seed embryos. The chain is Late embryogenesis abundant protein B19.3 (B19.3) from Hordeum vulgare (Barley).